We begin with the raw amino-acid sequence, 130 residues long: Lysozyme C (130 aa).

The region spanning 1 to 130 (KIYERCELAR…LTPYIRGCGV (130 aa)) is the C-type lysozyme domain. Intrachain disulfides connect Cys-6–Cys-128, Cys-30–Cys-116, Cys-65–Cys-81, and Cys-77–Cys-95. Residues Glu-35 and Asp-53 contribute to the active site.

It belongs to the glycosyl hydrolase 22 family. In terms of assembly, monomer.

The protein resides in the secreted. The enzyme catalyses Hydrolysis of (1-&gt;4)-beta-linkages between N-acetylmuramic acid and N-acetyl-D-glucosamine residues in a peptidoglycan and between N-acetyl-D-glucosamine residues in chitodextrins.. Functionally, lysozymes have primarily a bacteriolytic function; those in tissues and body fluids are associated with the monocyte-macrophage system and enhance the activity of immunoagents. The sequence is that of Lysozyme C (LYZ) from Oryctolagus cuniculus (Rabbit).